A 136-amino-acid polypeptide reads, in one-letter code: MLFPGGQTVLHKRLESQQIFVWLLQHYLGFYLGDIVGPFYGKLFLTQDQKHAFRPLKAHSSRSSSVIFEVVGYHYTDINSWLVRLLLCKKSYFAMTSNFFHVYFFSILKTRKSVNIKCWPLKPSNFTTNEYFIHTS.

This is an uncharacterized protein from Saccharomyces cerevisiae (strain ATCC 204508 / S288c) (Baker's yeast).